The following is a 464-amino-acid chain: D-inositol 3-phosphate glycosyltransferase (464 aa).

Residues 1–20 (MEGAPRRPDRHARSEEERHV) show a composition bias toward basic and acidic residues. The disordered stretch occupies residues 1-44 (MEGAPRRPDRHARSEEERHVSQYASRLGRRSPAAPTRRRMLRKP). 1D-myo-inositol 3-phosphate is bound at residue H53. Residues 59–60 (QP) and G67 contribute to the UDP-N-acetyl-alpha-D-glucosamine site. Residues 64 to 69 (DAGGMN), K122, Y155, T179, and R199 each bind 1D-myo-inositol 3-phosphate. UDP-N-acetyl-alpha-D-glucosamine-binding residues include R274, K279, and V340. The Mg(2+) site is built by F349, R350, and A352. E362 and E370 together coordinate UDP-N-acetyl-alpha-D-glucosamine. Residue T376 coordinates Mg(2+).

Belongs to the glycosyltransferase group 1 family. MshA subfamily. Homodimer.

The enzyme catalyses 1D-myo-inositol 3-phosphate + UDP-N-acetyl-alpha-D-glucosamine = 1D-myo-inositol 2-acetamido-2-deoxy-alpha-D-glucopyranoside 3-phosphate + UDP + H(+). Functionally, catalyzes the transfer of a N-acetyl-glucosamine moiety to 1D-myo-inositol 3-phosphate to produce 1D-myo-inositol 2-acetamido-2-deoxy-glucopyranoside 3-phosphate in the mycothiol biosynthesis pathway. The sequence is that of D-inositol 3-phosphate glycosyltransferase from Streptomyces avermitilis (strain ATCC 31267 / DSM 46492 / JCM 5070 / NBRC 14893 / NCIMB 12804 / NRRL 8165 / MA-4680).